Reading from the N-terminus, the 188-residue chain is Mitochondrial import receptor subunit TOM20 homolog (188 aa).

Over 1–12 (MSDTILGFNKSN) the chain is Mitochondrial intermembrane. Residues 13 to 31 (VVLAAGIAGAAFLGYCIYF) form a helical membrane-spanning segment. The Cytoplasmic segment spans residues 32–188 (DHKRINAPDY…ELIDDTDDLE (157 aa)). Disordered regions lie at residues 42 to 73 (KDKIRQKRRAQAGAGGMAPRRPAAAGNDAAPD) and 156 to 188 (DEAENEPPMVQYLGDGPPPAQIQELIDDTDDLE). Over residues 58 to 67 (MAPRRPAAAG) the composition is skewed to low complexity.

Belongs to the Tom20 family. As to quaternary structure, forms part of the preprotein translocase complex of the outer mitochondrial membrane (TOM complex).

It is found in the mitochondrion outer membrane. In terms of biological role, central component of the receptor complex responsible for the recognition and translocation of cytosolically synthesized mitochondrial preproteins. Together with tomm-22 functions as the transit peptide receptor at the surface of the mitochondrion outer membrane and facilitates the movement of preproteins into the translocation pore. The polypeptide is Mitochondrial import receptor subunit TOM20 homolog (Caenorhabditis elegans).